A 451-amino-acid polypeptide reads, in one-letter code: Gamma-aminobutyric acid receptor subunit alpha-2 (451 aa).

Residues 1–28 form the signal peptide; sequence MKTKLNSSNMQLLLFVFLAWDPARLVLA. The Extracellular segment spans residues 29 to 249; it reads NIQEDEAKNN…MTAHFHLKRK (221 aa). Asparagine 38 is a glycosylation site (N-linked (GlcNAc...) asparagine). Arginine 94 provides a ligand contact to 4-aminobutanoate. Asparagine 138 carries an N-linked (GlcNAc...) asparagine glycan. Threonine 157 lines the 4-aminobutanoate pocket. Cysteine 166 and cysteine 180 are joined by a disulfide. The N-linked (GlcNAc...) asparagine glycan is linked to asparagine 201. Residues 250-270 traverse the membrane as a helical segment; it reads IGYFVIQTYLPCIMTVILSQV. Over 271–280 the chain is Cytoplasmic; it reads SFWLNRESVP. A helical transmembrane segment spans residues 281 to 300; the sequence is ARTVFGVTTVLTMTTLSISA. Over 301-311 the chain is Extracellular; the sequence is RNSLPKVAYAT. A helical membrane pass occupies residues 312–332; the sequence is AMDWFIAVCYAFVFSALIEFA. The Cytoplasmic portion of the chain corresponds to 333–420; the sequence is TVNYFTKRGW…FNSVSKIDRM (88 aa). Residues 421–441 traverse the membrane as a helical segment; the sequence is SRIVFPVLFGTFNLVYWATYL. Over 442-451 the chain is Extracellular; sequence NREPVLGVSP.

This sequence belongs to the ligand-gated ion channel (TC 1.A.9) family. Gamma-aminobutyric acid receptor (TC 1.A.9.5) subfamily. GABRA2 sub-subfamily. As to quaternary structure, heteropentamer, formed by a combination of alpha (GABRA1-6), beta (GABRB1-3), gamma (GABRG1-3), delta (GABRD), epsilon (GABRE), rho (GABRR1-3), pi (GABRP) and theta (GABRQ) subunits, each subunit exhibiting distinct physiological and pharmacological properties. Interacts with UBQLN1. Interacts with KIF21B. Interacts with LHFPL4. Interacts with SHISA7; interaction leads to the regulation of GABA(A) receptor trafficking, channel deactivation kinetics and pharmacology. Glycosylated.

Its subcellular location is the postsynaptic cell membrane. The protein localises to the cell membrane. It localises to the cytoplasmic vesicle membrane. The protein resides in the cell projection. It is found in the dendrite. The enzyme catalyses chloride(in) = chloride(out). Activated by pentobarbital. Inhibited by the antagonist bicuculline. Its function is as follows. Alpha subunit of the heteropentameric ligand-gated chloride channel gated by gamma-aminobutyric acid (GABA), a major inhibitory neurotransmitter in the brain. GABA-gated chloride channels, also named GABA(A) receptors (GABAAR), consist of five subunits arranged around a central pore and contain GABA active binding site(s) located at the alpha and beta subunit interface(s). When activated by GABA, GABAARs selectively allow the flow of chloride anions across the cell membrane down their electrochemical gradient. Chloride influx into the postsynaptic neuron following GABAAR opening decreases the neuron ability to generate a new action potential, thereby reducing nerve transmission. The alpha-2 subunit exhibits synaptogenic activity together with beta-2 and very little to no activity together with beta-3, the gamma-2 subunit being necessary but not sufficient to induce rapid synaptic contacts formation. In Bos taurus (Bovine), this protein is Gamma-aminobutyric acid receptor subunit alpha-2 (GABRA2).